The chain runs to 360 residues: Phosphoserine aminotransferase (360 aa).

R42 serves as a coordination point for L-glutamate. Residues 76-77 (AS), W102, T152, D172, and Q195 contribute to the pyridoxal 5'-phosphate site. K196 bears the N6-(pyridoxal phosphate)lysine mark. 237–238 (NT) lines the pyridoxal 5'-phosphate pocket.

It belongs to the class-V pyridoxal-phosphate-dependent aminotransferase family. SerC subfamily. As to quaternary structure, homodimer. Requires pyridoxal 5'-phosphate as cofactor.

The protein localises to the cytoplasm. It catalyses the reaction O-phospho-L-serine + 2-oxoglutarate = 3-phosphooxypyruvate + L-glutamate. It carries out the reaction 4-(phosphooxy)-L-threonine + 2-oxoglutarate = (R)-3-hydroxy-2-oxo-4-phosphooxybutanoate + L-glutamate. Its pathway is amino-acid biosynthesis; L-serine biosynthesis; L-serine from 3-phospho-D-glycerate: step 2/3. Its function is as follows. Catalyzes the reversible conversion of 3-phosphohydroxypyruvate to phosphoserine and of 3-hydroxy-2-oxo-4-phosphonooxybutanoate to phosphohydroxythreonine. In Bacillus cereus (strain ZK / E33L), this protein is Phosphoserine aminotransferase.